The sequence spans 590 residues: Polypeptide N-acetylgalactosaminyltransferase 8 (590 aa).

Residues 1 to 11 lie on the Cytoplasmic side of the membrane; that stretch reads MCLDIWRHKKK. A helical; Signal-anchor for type II membrane protein transmembrane segment spans residues 12–31; that stretch reads VLPLLLLMAIGSIIYYLYTL. Residues 32–590 are Lumenal-facing; it reads KLEGERDESA…QHFWDNVKTQ (559 aa). N-linked (GlcNAc...) asparagine glycosylation occurs at N77. 5 cysteine pairs are disulfide-bonded: C117–C345, C336–C419, C459–C475, C502–C517, and C546–C561. The segment at 127-236 is catalytic subdomain A; the sequence is LPSVSVVITY…KGWLEPLIAP (110 aa). D168 contributes to the substrate binding site. D220 serves as a coordination point for Mn(2+). S221 contributes to the substrate binding site. Mn(2+) is bound at residue H222. Residue N241 is glycosylated (N-linked (GlcNAc...) asparagine). The segment at 291 to 353 is catalytic subdomain B; it reads PHKNPIMNGG…PCSRVGHLFR (63 aa). Position 322 (W322) interacts with substrate. H350 lines the Mn(2+) pocket. R353 contacts substrate. One can recognise a Ricin B-type lectin domain in the interval 446–573; that stretch reads ASGVLQSISS…KNHKQQWKFG (128 aa).

It belongs to the glycosyltransferase 2 family. GalNAc-T subfamily. Mn(2+) serves as cofactor. Expressed in developing oocytes and egg chambers. During embryonic stages 9-11, expressed in the primordium of the foregut, midgut and hindgut. During embryonic stages 12-13, expressed in the posterior midgut and hindgut. During embryonic stages 14-15, expression continues in the hindgut. No expression detected during embryonic stages 16-17 or in third instar larvae imaginal disks.

It localises to the golgi apparatus membrane. The catalysed reaction is L-seryl-[protein] + UDP-N-acetyl-alpha-D-galactosamine = a 3-O-[N-acetyl-alpha-D-galactosaminyl]-L-seryl-[protein] + UDP + H(+). It carries out the reaction L-threonyl-[protein] + UDP-N-acetyl-alpha-D-galactosamine = a 3-O-[N-acetyl-alpha-D-galactosaminyl]-L-threonyl-[protein] + UDP + H(+). It participates in protein modification; protein glycosylation. Its function is as follows. Catalyzes the initial reaction in O-linked oligosaccharide biosynthesis, the transfer of an N-acetyl-D-galactosamine residue to a serine or threonine residue on the protein receptor. It can both act as a peptide transferase that transfers GalNAc onto unmodified peptide substrates, and as a glycopeptide transferase that requires the prior addition of a GalNAc on a peptide before adding additional GalNAc moieties. Prefers both EA2 and the diglycosylated Muc5AC-3/13 as substrates, albeit at very low levels fro Muc5AC-3/13. The chain is Polypeptide N-acetylgalactosaminyltransferase 8 from Drosophila melanogaster (Fruit fly).